The primary structure comprises 1221 residues: WEB family protein At4g27595, chloroplastic (1221 aa).

The segment at 1–68 is disordered; it reads MASRTKTGLM…VSDRRTARVP (68 aa). A chloroplast-targeting transit peptide spans 1–82; the sequence is MASRTKTGLM…ANYFLIIICM (82 aa). The span at 32–58 shows a compositional bias: polar residues; it reads SDGNSPSPVQSTRLSIDRSPQTVNSKP. 3 coiled-coil regions span residues 95–149, 202–543, and 587–1084; these read TGLL…AAQH, TEEL…FNSK, and AAKE…GEEI. The segment covering 1073-1083 has biased composition (basic and acidic residues); sequence EASSTHEKGEE. Residues 1073–1221 are disordered; sequence EASSTHEKGE…LLKKKSSSQK (149 aa). Positions 1084-1097 are enriched in polar residues; the sequence is ITNTNPFDNSTGEQ. 2 stretches are compositionally biased toward basic and acidic residues: residues 1106–1116 and 1129–1160; these read AIDRHLKDDTT and KGEKGKDKDTVESEVYHLEKREASSERDTEHD. The span at 1175 to 1187 shows a compositional bias: polar residues; that stretch reads NFDQLSNGLSLAE.

This sequence belongs to the WEB family.

The protein resides in the plastid. It is found in the chloroplast. This Arabidopsis thaliana (Mouse-ear cress) protein is WEB family protein At4g27595, chloroplastic.